The primary structure comprises 281 residues: Large ribosomal subunit protein uL2 (281 aa).

Residues 215-281 (LGRRPHTRGV…RRNNRKDSKK (67 aa)) form a disordered region. Positions 258–269 (KTRDNKSTDKFI) are enriched in basic and acidic residues. The span at 270-281 (VRRRNNRKDSKK) shows a compositional bias: basic residues.

Belongs to the universal ribosomal protein uL2 family. As to quaternary structure, part of the 50S ribosomal subunit. Forms a bridge to the 30S subunit in the 70S ribosome.

In terms of biological role, one of the primary rRNA binding proteins. Required for association of the 30S and 50S subunits to form the 70S ribosome, for tRNA binding and peptide bond formation. It has been suggested to have peptidyltransferase activity; this is somewhat controversial. Makes several contacts with the 16S rRNA in the 70S ribosome. The sequence is that of Large ribosomal subunit protein uL2 from Pelagibacter ubique (strain HTCC1062).